Reading from the N-terminus, the 232-residue chain is H-2 class II histocompatibility antigen, E-S beta chain (232 aa).

Positions tryptophan 1 to valine 90 are beta-1. The Extracellular segment spans residues tryptophan 1–lysine 193. 2 cysteine pairs are disulfide-bonded: cysteine 10-cysteine 74 and cysteine 112-cysteine 168. Residue asparagine 14 is glycosylated (N-linked (GlcNAc...) asparagine). A beta-2 region spans residues glutamate 91–lysine 193. The Ig-like C1-type domain occupies proline 92–glutamate 182. Residues methionine 194 to phenylalanine 216 traverse the membrane as a helical segment. The Cytoplasmic portion of the chain corresponds to arginine 217 to serine 232.

This sequence belongs to the MHC class II family. Ubiquitinated in immature dendritic cells leading to down-regulation of MHC class II.

It localises to the membrane. The polypeptide is H-2 class II histocompatibility antigen, E-S beta chain (H2-Eb1) (Mus musculus (Mouse)).